The primary structure comprises 1030 residues: F-box/WD repeat-containing protein 10 (1030 aa).

Residues 280–329 (RDFIRDLPLHLSKYILRMLDKHSLNRCIFVSQHWATLAQQVKVDQSMHSF) form the F-box domain. 5 WD repeats span residues 466–505 (GHAGSVRALFLSEEDNILLSGSYDLSIRYWDVKTGACVRI), 508–547 (GHQGTITCLDVYKNRLVSGAKDGQVKEWDIETGKCLKTFK), 549–584 (KDPILAAKISETYIVSSCERGIVKVWHVVTAQLQKT), 587–624 (GHEGAVKCLFFNEWHLVSGGADGLVMAWSMVGKYERCL), and 626–667 (AFKH…KVIK). A disordered region spans residues 709–773 (KNKVKKSKDK…LSSDDMETPV (65 aa)). Over residues 716-733 (KDKEEEREETSLGDEHSR) the composition is skewed to basic and acidic residues. Residues 734 to 749 (STIQGHSLKDSVSSKQ) are compositionally biased toward polar residues. A coiled-coil region spans residues 963-992 (FMLMTVKEEKEFAEAKMKEYEASVSTKEVD).

Its function is as follows. Probable substrate-recognition component of a SCF (SKP1-CUL1-F-box protein)-type E3 ubiquitin ligase complex which mediates the ubiquitination and subsequent proteasomal degradation of target proteins. Overexpression is leading to degradation of CBX5 and CBX1. This chain is F-box/WD repeat-containing protein 10 (Fbxw10), found in Mus musculus (Mouse).